Here is a 494-residue protein sequence, read N- to C-terminus: Anthranilate synthase component 1 (494 aa).

Residues serine 50 and 276–278 each bind L-tryptophan; that span reads PYM. Chorismate is bound at residue 311 to 312; the sequence is GT. A Mg(2+)-binding site is contributed by glutamate 338. Chorismate is bound by residues tyrosine 426, arginine 446, 460–462, and glycine 462; that span reads GAG. A Mg(2+)-binding site is contributed by glutamate 475.

This sequence belongs to the anthranilate synthase component I family. As to quaternary structure, heterotetramer consisting of two non-identical subunits: a beta subunit (TrpG) and a large alpha subunit (TrpE). Mg(2+) is required as a cofactor.

It catalyses the reaction chorismate + L-glutamine = anthranilate + pyruvate + L-glutamate + H(+). It participates in amino-acid biosynthesis; L-tryptophan biosynthesis; L-tryptophan from chorismate: step 1/5. With respect to regulation, feedback inhibited by tryptophan. Part of a heterotetrameric complex that catalyzes the two-step biosynthesis of anthranilate, an intermediate in the biosynthesis of L-tryptophan. In the first step, the glutamine-binding beta subunit (TrpG) of anthranilate synthase (AS) provides the glutamine amidotransferase activity which generates ammonia as a substrate that, along with chorismate, is used in the second step, catalyzed by the large alpha subunit of AS (TrpE) to produce anthranilate. In the absence of TrpG, TrpE can synthesize anthranilate directly from chorismate and high concentrations of ammonia. This is Anthranilate synthase component 1 (trpE) from Acetivibrio thermocellus (Hungateiclostridium thermocellum).